The primary structure comprises 20 residues: Phenol-soluble modulin alpha 4 peptide (20 aa).

It belongs to the phenol-soluble modulin alpha peptides family.

In terms of biological role, peptide which can recruit, activate and subsequently lyse neutrophils, thus eliminating the main cellular defense against infection. The polypeptide is Phenol-soluble modulin alpha 4 peptide (psmA4) (Staphylococcus aureus (strain bovine RF122 / ET3-1)).